A 447-amino-acid chain; its full sequence is GTPase Der (447 aa).

2 consecutive EngA-type G domains span residues 3-167 (PVIA…FAER) and 181-354 (TRIA…AAAM). GTP is bound by residues 9-16 (GRPNVGKS), 56-60 (DTGGF), 119-122 (NKAE), 187-194 (GRPNVGKS), 234-238 (DTAGL), and 299-302 (NKWD). In terms of domain architecture, KH-like spans 355-439 (VKLPTPKLTR…PLRIEFRTNK (85 aa)).

Belongs to the TRAFAC class TrmE-Era-EngA-EngB-Septin-like GTPase superfamily. EngA (Der) GTPase family. As to quaternary structure, associates with the 50S ribosomal subunit.

GTPase that plays an essential role in the late steps of ribosome biogenesis. The polypeptide is GTPase Der (Ralstonia nicotianae (strain ATCC BAA-1114 / GMI1000) (Ralstonia solanacearum)).